A 156-amino-acid chain; its full sequence is 6,7-dimethyl-8-ribityllumazine synthase (156 aa).

5-amino-6-(D-ribitylamino)uracil is bound by residues phenylalanine 23, 57-59 (AFE), and 81-83 (AVI). 86 to 87 (AT) contributes to the (2S)-2-hydroxy-3-oxobutyl phosphate binding site. Catalysis depends on histidine 89, which acts as the Proton donor. 5-amino-6-(D-ribitylamino)uracil is bound at residue asparagine 114. Position 128 (arginine 128) interacts with (2S)-2-hydroxy-3-oxobutyl phosphate.

The protein belongs to the DMRL synthase family.

It catalyses the reaction (2S)-2-hydroxy-3-oxobutyl phosphate + 5-amino-6-(D-ribitylamino)uracil = 6,7-dimethyl-8-(1-D-ribityl)lumazine + phosphate + 2 H2O + H(+). It functions in the pathway cofactor biosynthesis; riboflavin biosynthesis; riboflavin from 2-hydroxy-3-oxobutyl phosphate and 5-amino-6-(D-ribitylamino)uracil: step 1/2. Catalyzes the formation of 6,7-dimethyl-8-ribityllumazine by condensation of 5-amino-6-(D-ribitylamino)uracil with 3,4-dihydroxy-2-butanone 4-phosphate. This is the penultimate step in the biosynthesis of riboflavin. The polypeptide is 6,7-dimethyl-8-ribityllumazine synthase (Aliarcobacter butzleri (strain RM4018) (Arcobacter butzleri)).